Here is a 108-residue protein sequence, read N- to C-terminus: Urease subunit beta (108 aa).

The protein belongs to the urease beta subunit family. In terms of assembly, heterotrimer of UreA (gamma), UreB (beta) and UreC (alpha) subunits. Three heterotrimers associate to form the active enzyme.

The protein localises to the cytoplasm. The catalysed reaction is urea + 2 H2O + H(+) = hydrogencarbonate + 2 NH4(+). It participates in nitrogen metabolism; urea degradation; CO(2) and NH(3) from urea (urease route): step 1/1. The chain is Urease subunit beta from Microcystis aeruginosa (strain NIES-843 / IAM M-2473).